Here is a 366-residue protein sequence, read N- to C-terminus: Structure-specific endonuclease subunit SLX1 (366 aa).

In terms of domain architecture, GIY-YIG spans 14 to 95; it reads AFYCCYLLRS…QNTHATRHID (82 aa). Disordered regions lie at residues 31–59 and 102–124; these read IGSTPNPARRLGQHNGSSKGGAKRTSMQG and RAEELQKGKKKATSPGRRRKRPP. Over residues 109 to 123 the composition is skewed to basic residues; sequence GKKKATSPGRRRKRP. The segment at 234 to 289 adopts an SLX1-type zinc-finger fold; the sequence is CGVCKNPADMSSSLILVCPIEACQTVSHLSCLSNKFLTEGGELETLVPLEGTCPGC. The segment at 317-366 is disordered; that stretch reads KPKRKRKSDNPAESDAADGQALEQEDEELDETWMEDMSQDEEPSPVKKSR. Residues 339-359 show a composition bias toward acidic residues; it reads EQEDEELDETWMEDMSQDEEP.

It belongs to the SLX1 family. In terms of assembly, forms a heterodimer with SLX4. The cofactor is a divalent metal cation.

It is found in the nucleus. Catalytic subunit of the SLX1-SLX4 structure-specific endonuclease that resolves DNA secondary structures generated during DNA repair and recombination. Has endonuclease activity towards branched DNA substrates, introducing single-strand cuts in duplex DNA close to junctions with ss-DNA. This Phaeosphaeria nodorum (strain SN15 / ATCC MYA-4574 / FGSC 10173) (Glume blotch fungus) protein is Structure-specific endonuclease subunit SLX1.